Consider the following 390-residue polypeptide: UPF0229 protein ABC1477 (390 aa).

Disordered stretches follow at residues 1–31 and 81–118; these read MEKDNGRQFTISQENWSLHRKGFQDQRRHQE and VGQGKGDSKIGDIVARDPNGDKQAGAGKGSGAGDQAGE. Residues 7-16 are compositionally biased toward polar residues; the sequence is RQFTISQENW. Basic and acidic residues-rich tracts occupy residues 22-31 and 86-100; these read GFQDQRRHQE and GDSKIGDIVARDPNG.

Belongs to the UPF0229 family.

The protein is UPF0229 protein ABC1477 of Shouchella clausii (strain KSM-K16) (Alkalihalobacillus clausii).